The following is a 483-amino-acid chain: Sphingomyelin synthase-related 1 (483 aa).

3 helical membrane passes run 182–202 (LIAF…MVLV), 230–250 (FDMC…VLFF), and 261–281 (MFSL…ITSL). Residue His-330 is part of the active site. A helical transmembrane segment spans residues 349-369 (WTGLHTFTWVLNCFAIFLILA). Active-site residues include His-373 and Asp-377. The helical transmembrane segment at 376-396 (IDVFIAFYISSRMFLYYHAYA) threads the bilayer. The Cytoplasmic portion of the chain corresponds to 397–483 (YNHAGITATD…NSKNHTKKHN (87 aa)). The segment covering 450 to 461 (EPKITPKSDSSR) has biased composition (basic and acidic residues). Residues 450–483 (EPKITPKSDSSRKRSSVVAAKQNGNSKNHTKKHN) form a disordered region.

Belongs to the sphingomyelin synthase family.

It localises to the membrane. This chain is Sphingomyelin synthase-related 1, found in Caenorhabditis elegans.